Reading from the N-terminus, the 391-residue chain is Succinate--CoA ligase [ADP-forming] subunit beta (391 aa).

One can recognise an ATP-grasp domain in the interval Lys9–Glu248. Residues Lys50, Gly57–Gly59, Glu103, Met106, and Glu111 contribute to the ATP site. Mg(2+) is bound by residues Asn203 and Asp217. Substrate contacts are provided by residues Asn268 and Gly325–Val327.

It belongs to the succinate/malate CoA ligase beta subunit family. As to quaternary structure, heterotetramer of two alpha and two beta subunits. The cofactor is Mg(2+).

The catalysed reaction is succinate + ATP + CoA = succinyl-CoA + ADP + phosphate. It catalyses the reaction GTP + succinate + CoA = succinyl-CoA + GDP + phosphate. It participates in carbohydrate metabolism; tricarboxylic acid cycle; succinate from succinyl-CoA (ligase route): step 1/1. In terms of biological role, succinyl-CoA synthetase functions in the citric acid cycle (TCA), coupling the hydrolysis of succinyl-CoA to the synthesis of either ATP or GTP and thus represents the only step of substrate-level phosphorylation in the TCA. The beta subunit provides nucleotide specificity of the enzyme and binds the substrate succinate, while the binding sites for coenzyme A and phosphate are found in the alpha subunit. The sequence is that of Succinate--CoA ligase [ADP-forming] subunit beta from Chlorobium luteolum (strain DSM 273 / BCRC 81028 / 2530) (Pelodictyon luteolum).